The chain runs to 372 residues: DNA replication and repair protein RecF (372 aa).

30–37 (GENGQGKT) contributes to the ATP binding site.

This sequence belongs to the RecF family.

Its subcellular location is the cytoplasm. Functionally, the RecF protein is involved in DNA metabolism; it is required for DNA replication and normal SOS inducibility. RecF binds preferentially to single-stranded, linear DNA. It also seems to bind ATP. This Anaeromyxobacter dehalogenans (strain 2CP-C) protein is DNA replication and repair protein RecF.